The chain runs to 151 residues: UPF0098 protein MTH_273 (151 aa).

This sequence belongs to the UPF0098 family.

The protein is UPF0098 protein MTH_273 of Methanothermobacter thermautotrophicus (strain ATCC 29096 / DSM 1053 / JCM 10044 / NBRC 100330 / Delta H) (Methanobacterium thermoautotrophicum).